The following is a 152-amino-acid chain: Aspartate carbamoyltransferase regulatory chain (152 aa).

Zn(2+)-binding residues include cysteine 107, cysteine 112, cysteine 136, and cysteine 139.

Belongs to the PyrI family. Contains catalytic and regulatory chains. The cofactor is Zn(2+).

In terms of biological role, involved in allosteric regulation of aspartate carbamoyltransferase. The sequence is that of Aspartate carbamoyltransferase regulatory chain from Chromobacterium violaceum (strain ATCC 12472 / DSM 30191 / JCM 1249 / CCUG 213 / NBRC 12614 / NCIMB 9131 / NCTC 9757 / MK).